The sequence spans 497 residues: Probable cytosol aminopeptidase (497 aa).

2 residues coordinate Mn(2+): K267 and D272. K279 is an active-site residue. 3 residues coordinate Mn(2+): D290, D349, and E351. R353 is a catalytic residue.

Belongs to the peptidase M17 family. Mn(2+) serves as cofactor.

The protein resides in the cytoplasm. The enzyme catalyses Release of an N-terminal amino acid, Xaa-|-Yaa-, in which Xaa is preferably Leu, but may be other amino acids including Pro although not Arg or Lys, and Yaa may be Pro. Amino acid amides and methyl esters are also readily hydrolyzed, but rates on arylamides are exceedingly low.. It catalyses the reaction Release of an N-terminal amino acid, preferentially leucine, but not glutamic or aspartic acids.. Its function is as follows. Presumably involved in the processing and regular turnover of intracellular proteins. Catalyzes the removal of unsubstituted N-terminal amino acids from various peptides. This chain is Probable cytosol aminopeptidase, found in Pseudomonas entomophila (strain L48).